The following is a 206-amino-acid chain: Ras-related protein ralB-B (206 aa).

Residue 21–28 coordinates GTP; sequence GSGGVGKS. The Effector region signature appears at 43-51; the sequence is YEPTKADSY. Residues 68–72 and 128–131 each bind GTP; these read DTAGQ and NKSD. A compositionally biased stretch (basic and acidic residues) spans 180 to 189; sequence KMSENKDKNG. The interval 180 to 206 is disordered; that stretch reads KMSENKDKNGKKSGKSKKGFKQRCCLL. The segment covering 190–200 has biased composition (basic residues); sequence KKSGKSKKGFK. Cysteine methyl ester is present on Cys-203. Cys-203 is lipidated: S-geranylgeranyl cysteine. A propeptide spans 204–206 (removed in mature form); it reads CLL.

This sequence belongs to the small GTPase superfamily. Ras family. In terms of assembly, interacts with ralbp1 and rap1gds1.

Its subcellular location is the cell membrane. It localises to the midbody. It catalyses the reaction GTP + H2O = GDP + phosphate + H(+). In terms of biological role, multifunctional GTPase involved in a variety of cellular processes including gene expression, cell migration, cell proliferation, oncogenic transformation and membrane trafficking. Accomplishes its multiple functions by interacting with distinct downstream effectors. Acts as a GTP sensor for GTP-dependent exocytosis of dense core vesicles. Required both to stabilize the assembly of the exocyst complex and to localize functional exocyst complexes to the leading edge of migrating cells. Required for suppression of apoptosis. In late stages of cytokinesis, upon completion of the bridge formation between dividing cells, mediates exocyst recruitment to the midbody to drive abscission. Regulates the actin cytoskeleton to play a role in gastrulation or neurulation. During the cleavage stages, the GTP-bound form induces a cortical reaction that affects the localization of pigment granules. Activated by the FGF pathway via ras and ral-GDS, but independently of raf. Directs ralbp1 to the plasma membrane. Involved in ligand-dependent receptor mediated endocytosis of the EGF and insulin receptors. The protein is Ras-related protein ralB-B (ralb-b) of Xenopus laevis (African clawed frog).